The following is a 180-amino-acid chain: Large ribosomal subunit protein uL16 (180 aa).

Belongs to the universal ribosomal protein uL16 family.

This chain is Large ribosomal subunit protein uL16, found in Hyperthermus butylicus (strain DSM 5456 / JCM 9403 / PLM1-5).